We begin with the raw amino-acid sequence, 172 residues long: Single-stranded DNA-binding protein A (172 aa).

The 104-residue stretch at 1–104 folds into the SSB domain; sequence MLNRVVLVGR…VQAESVQFLE (104 aa). Phosphotyrosine is present on tyrosine 82. Residues 103-172 are disordered; sequence LEPKNGGGSG…IDISDDDLPF (70 aa). The span at 107 to 131 shows a compositional bias: gly residues; it reads NGGGSGSGGYNEGNSGGGQYFGGGQ. A compositionally biased stretch (low complexity) spans 132-149; the sequence is NDNPFGGNQNNQRRNQGN. The Important for interaction with partner proteins motif lies at 167 to 172; it reads DDDLPF.

Homotetramer. Interacts with proteins involved in DNA metabolism such as PriA, RecQ, RecG, RecS, DnaE, RarA, RecJ, RecO, SbcC, RecD2 (formerly YrrC), XseA and Ung. Interacts with RecQ via its 10 C-terminal residues. Interacts with RecD2. In terms of processing, phosphorylated by YwqD, which increases ssDNA affinity; dephosphorylated by YwqE.

It localises to the cytoplasm. It is found in the nucleoid. Plays an important role in DNA replication, recombination and repair. Binds to single-stranded (ss)DNA and to an array of partner proteins to recruit them to their sites of action during DNA metabolism. Associates with oriC, this requires DnaA. SsbA binding to ssDNA prevents DnaB and DnaD individually from binding to DNA. Has a 20-fold higher affinity for ssDNA than SsbB; SsbA and DprA activate the homologous DNA strand exchange function of RecA-ATP. Enhances the activity of 3'-5' DNA helicase RecQ. The chain is Single-stranded DNA-binding protein A (ssbA) from Bacillus subtilis (strain 168).